Here is a 203-residue protein sequence, read N- to C-terminus: NADH-quinone oxidoreductase subunit C (203 aa).

The protein belongs to the complex I 30 kDa subunit family. In terms of assembly, NDH-1 is composed of 14 different subunits. Subunits NuoB, C, D, E, F, and G constitute the peripheral sector of the complex.

The protein localises to the cell inner membrane. The catalysed reaction is a quinone + NADH + 5 H(+)(in) = a quinol + NAD(+) + 4 H(+)(out). In terms of biological role, NDH-1 shuttles electrons from NADH, via FMN and iron-sulfur (Fe-S) centers, to quinones in the respiratory chain. The immediate electron acceptor for the enzyme in this species is believed to be ubiquinone. Couples the redox reaction to proton translocation (for every two electrons transferred, four hydrogen ions are translocated across the cytoplasmic membrane), and thus conserves the redox energy in a proton gradient. The chain is NADH-quinone oxidoreductase subunit C from Polaromonas sp. (strain JS666 / ATCC BAA-500).